The following is a 246-amino-acid chain: 23S rRNA (guanosine-2'-O-)-methyltransferase RlmB (246 aa).

The S-adenosyl-L-methionine site is built by G197, I217, and L226.

Belongs to the class IV-like SAM-binding methyltransferase superfamily. RNA methyltransferase TrmH family. RlmB subfamily.

It localises to the cytoplasm. It catalyses the reaction guanosine(2251) in 23S rRNA + S-adenosyl-L-methionine = 2'-O-methylguanosine(2251) in 23S rRNA + S-adenosyl-L-homocysteine + H(+). Specifically methylates the ribose of guanosine 2251 in 23S rRNA. The chain is 23S rRNA (guanosine-2'-O-)-methyltransferase RlmB from Haemophilus ducreyi (strain 35000HP / ATCC 700724).